Here is a 229-residue protein sequence, read N- to C-terminus: Large ribosomal subunit protein uL1 (229 aa).

This sequence belongs to the universal ribosomal protein uL1 family. As to quaternary structure, part of the 50S ribosomal subunit.

Functionally, binds directly to 23S rRNA. The L1 stalk is quite mobile in the ribosome, and is involved in E site tRNA release. Protein L1 is also a translational repressor protein, it controls the translation of the L11 operon by binding to its mRNA. The polypeptide is Large ribosomal subunit protein uL1 (Thermus thermophilus (strain ATCC BAA-163 / DSM 7039 / HB27)).